The following is a 206-amino-acid chain: Small ribosomal subunit protein uS4 (206 aa).

The S4 RNA-binding domain maps to 96-156 (GRLDNVVYRM…EKAKKQSRVK (61 aa)).

The protein belongs to the universal ribosomal protein uS4 family. As to quaternary structure, part of the 30S ribosomal subunit. Contacts protein S5. The interaction surface between S4 and S5 is involved in control of translational fidelity.

Its function is as follows. One of the primary rRNA binding proteins, it binds directly to 16S rRNA where it nucleates assembly of the body of the 30S subunit. In terms of biological role, with S5 and S12 plays an important role in translational accuracy. The chain is Small ribosomal subunit protein uS4 from Pectobacterium atrosepticum (strain SCRI 1043 / ATCC BAA-672) (Erwinia carotovora subsp. atroseptica).